Here is a 226-residue protein sequence, read N- to C-terminus: Ribonuclease 3 (226 aa).

One can recognise an RNase III domain in the interval 2–129 (IETISKTIKY…LIGAIYLDGG (128 aa)). Glu-42 lines the Mg(2+) pocket. The active site involves Asp-46. Residues Asn-115 and Glu-118 each contribute to the Mg(2+) site. The active site involves Glu-118. The DRBM domain maps to 154–223 (DAKTILQEFI…ASLMLNQIKD (70 aa)).

It belongs to the ribonuclease III family. Homodimer. Mg(2+) serves as cofactor.

It localises to the cytoplasm. It carries out the reaction Endonucleolytic cleavage to 5'-phosphomonoester.. Digests double-stranded RNA. Involved in the processing of primary rRNA transcript to yield the immediate precursors to the large and small rRNAs (23S and 16S). Processes some mRNAs, and tRNAs when they are encoded in the rRNA operon. Processes pre-crRNA and tracrRNA of type II CRISPR loci if present in the organism. This chain is Ribonuclease 3, found in Ehrlichia canis (strain Jake).